The following is a 151-amino-acid chain: MATLEQNLQEMLQDAVEDLGCELWGIECQRMGRFMTVRLFIDKDGGVTVDDCADVSRQVSAILDVEDPIADKYNLEVSSPGLDRPLFTLPQFERYIGQDIAVHLRIPVMERRKWQGKLERIEKDMITLIVDDQEQILVFGNIQKANVVAKF.

The protein belongs to the RimP family.

The protein localises to the cytoplasm. Required for maturation of 30S ribosomal subunits. The chain is Ribosome maturation factor RimP from Haemophilus influenzae (strain PittEE).